The following is a 302-amino-acid chain: uncharacterized protein (302 aa).

The region spanning 19 to 90 (QWLFSVLKTA…GELDILFEDN (72 aa)) is the S4 RNA-binding domain. D138 is a catalytic residue. The interval 182-205 (KGTINSPIGRDRSHPTRRRVSPGG) is disordered.

It belongs to the pseudouridine synthase RluA family.

It carries out the reaction a uridine in RNA = a pseudouridine in RNA. This is an uncharacterized protein from Bacillus subtilis (strain 168).